The sequence spans 386 residues: DNA dC-&gt;dU-editing enzyme APOBEC-3D (386 aa).

CMP/dCMP-type deaminase domains follow at residues 29–145 (GRSY…DWRW) and 187–334 (DDNY…LCSL). Zn(2+)-binding residues include His78, Cys109, Cys112, and His262. The active-site Proton donor is the Glu264. Zn(2+)-binding residues include Cys293 and Cys296.

Belongs to the cytidine and deoxycytidylate deaminase family. In terms of assembly, can form homo- and heterodimers with APOBEC3F and APOBEC3G. Interacts with L1RE1; this interaction inhibits LINE-1 retrotransposition. As to quaternary structure, (Microbial infection) Interacts with HIV-1 Vif. This interaction triggers APOBEC3D polyubiquitylation and degradation by the 26S proteasome. Zn(2+) is required as a cofactor. Expressed in lymphoid organs. Also detected in non-lymphoid tissues including lung.

It is found in the cytoplasm. Its subcellular location is the P-body. It carries out the reaction a 2'-deoxycytidine in single-stranded DNA + H2O + H(+) = a 2'-deoxyuridine in single-stranded DNA + NH4(+). Its activity is regulated as follows. (Microbial infection) Antiviral activity is neutralized by the HIV-1 virion infectivity factor (Vif), that prevents its incorporation into progeny virions by both inhibiting its translation and/or by inducing its ubiquitination and subsequent degradation by the 26S proteasome. In terms of biological role, DNA deaminase (cytidine deaminase) which acts as an inhibitor of retrovirus replication and retrotransposon mobility via deaminase-dependent and -independent mechanisms. Exhibits antiviral activity against HIV-1. After the penetration of retroviral nucleocapsids into target cells of infection and the initiation of reverse transcription, it can induce the conversion of cytosine to uracil in the minus-sense single-strand viral DNA, leading to G-to-A hypermutations in the subsequent plus-strand viral DNA. The resultant detrimental levels of mutations in the proviral genome, along with a deamination-independent mechanism that works prior to the proviral integration, together exert efficient antiretroviral effects in infected target cells. Selectively targets single-stranded DNA and does not deaminate double-stranded DNA or single- or double-stranded RNA. Also inhibits the mobility of LTR and non-LTR retrotransposons. (Microbial infection) Enhances hepatitis B virus/HBV replication by excluding restriction factors APOBEC3F and APOBEC3G from HBV capsids. In Homo sapiens (Human), this protein is DNA dC-&gt;dU-editing enzyme APOBEC-3D.